The chain runs to 308 residues: Mycothiol acetyltransferase (308 aa).

2 consecutive N-acetyltransferase domains span residues 12–149 (DVLD…RPLG) and 165–308 (VTVR…RTET). Glu-43 lines the 1D-myo-inositol 2-(L-cysteinylamino)-2-deoxy-alpha-D-glucopyranoside pocket. 88–90 (LVV) is an acetyl-CoA binding site. Residues Glu-192, Lys-231, and Glu-240 each coordinate 1D-myo-inositol 2-(L-cysteinylamino)-2-deoxy-alpha-D-glucopyranoside. Residues 244–246 (VGV) and 251–257 (QGGGLGR) contribute to the acetyl-CoA site. Tyr-278 contacts 1D-myo-inositol 2-(L-cysteinylamino)-2-deoxy-alpha-D-glucopyranoside.

This sequence belongs to the acetyltransferase family. MshD subfamily. As to quaternary structure, monomer.

The catalysed reaction is 1D-myo-inositol 2-(L-cysteinylamino)-2-deoxy-alpha-D-glucopyranoside + acetyl-CoA = mycothiol + CoA + H(+). Functionally, catalyzes the transfer of acetyl from acetyl-CoA to desacetylmycothiol (Cys-GlcN-Ins) to form mycothiol. This Streptomyces bingchenggensis (strain BCW-1) protein is Mycothiol acetyltransferase.